The sequence spans 1361 residues: Cell migration-inducing and hyaluronan-binding protein (1361 aa).

Positions 1–30 (MGAAGRQDFLFKAMLTISWLTLTCFPGATS) are cleaved as a signal peptide. Residues 44–166 (QPWNPGHDQD…KKLSWTFLNK (123 aa)) form the G8 domain. N-linked (GlcNAc...) asparagine glycosylation is found at Asn-119, Asn-165, Asn-312, Asn-370, and Asn-420. Residues 176 to 317 (GGYFFERSWG…GEYFNVSLSS (142 aa)) enclose the GG-type lectin 1 domain. Residues 295 to 591 (AAARVFKLFQ…IHHTFSRCVT (297 aa)) are necessary for its endoplasmic reticulum (ER) retention and interaction with HSPA5. PbH1 repeat units follow at residues 572-594 (DPPT…TVHG), 595-617 (SNGL…FTED), 719-741 (IPLG…IIDN), and 798-819 (GGDV…TLAS). N-linked (GlcNAc...) asparagine glycans are attached at residues Asn-889 and Asn-921. Residues 1227-1361 (NDFAYIEVDG…PIPVVKKKKL (135 aa)) enclose the GG-type lectin 2 domain.

It belongs to the CEMIP family. As to quaternary structure, interacts with EPHA2 and ITPR3. Interacts with HSPA5/BIP; the interaction induces calcium leakage from the endoplasmic reticulum and cell migration. Interacts with clathrin heavy chain/CLTC. Post-translationally, N-glycosylated; glycosylation is not necessary for HA-binding. In terms of tissue distribution, expressed in dermal and in synovial fibroblasts. Strongly expressed in gastric cancers compared with the paired normal tissues. Strongly expressed in both ductal carcinoma and invasive breast cancer cells compared with benign epithelial cells (at protein level). Strongly expressed in brain, placenta, prostate, breast, lung and testis. Expressed in fibroblasts, epithelial cells and cancer cells. In ear, it is specifically expressed in inner ear. Expressed in cochlea and vestibule tissues. Strongly expressed in gastric cancers compared with the paired normal tissues. Strongly expressed in colon adenocarcinomas compared with normal colonic mucosas. Strongly expressed in breast cancer as compared to normal breast tissue.

The protein resides in the nucleus. The protein localises to the cytoplasm. It localises to the endoplasmic reticulum. It is found in the cell membrane. Its subcellular location is the membrane. The protein resides in the clathrin-coated pit. The protein localises to the secreted. It carries out the reaction Random hydrolysis of (1-&gt;4)-linkages between N-acetyl-beta-D-glucosamine and D-glucuronate residues in hyaluronate.. Its activity is regulated as follows. Activity is up-regulated by histamine. Functionally, mediates depolymerization of hyaluronic acid (HA) via the cell membrane-associated clathrin-coated pit endocytic pathway. Binds to hyaluronic acid. Hydrolyzes high molecular weight hyaluronic acid to produce an intermediate-sized product, a process that may occur through rapid vesicle endocytosis and recycling without intracytoplasmic accumulation or digestion in lysosomes. Involved in hyaluronan catabolism in the dermis of the skin and arthritic synovium. Positively regulates epithelial-mesenchymal transition (EMT), and hence tumor cell growth, invasion and cancer dissemination. In collaboration with HSPA5/BIP, promotes cancer cell migration in a calcium and PKC-dependent manner. May be involved in hearing. The sequence is that of Cell migration-inducing and hyaluronan-binding protein from Homo sapiens (Human).